The chain runs to 302 residues: GTPase Era (302 aa).

The Era-type G domain maps to R10–E178. The tract at residues G18–S25 is G1. G18–S25 provides a ligand contact to GTP. The interval Q44–H48 is G2. The G3 stretch occupies residues D65–G68. GTP is bound by residues D65–M69 and N127–D130. Residues N127–D130 are G4. Positions I157–A159 are G5. The 85-residue stretch at V201–G285 folds into the KH type-2 domain.

This sequence belongs to the TRAFAC class TrmE-Era-EngA-EngB-Septin-like GTPase superfamily. Era GTPase family. As to quaternary structure, monomer.

The protein resides in the cytoplasm. Its subcellular location is the cell inner membrane. Its function is as follows. An essential GTPase that binds both GDP and GTP, with rapid nucleotide exchange. Plays a role in 16S rRNA processing and 30S ribosomal subunit biogenesis and possibly also in cell cycle regulation and energy metabolism. The polypeptide is GTPase Era (Pseudomonas putida (strain ATCC 47054 / DSM 6125 / CFBP 8728 / NCIMB 11950 / KT2440)).